Reading from the N-terminus, the 52-residue chain is Keratin-associated protein 19-2 (52 aa).

It belongs to the KRTAP type 19 family. In terms of assembly, interacts with hair keratins.

In the hair cortex, hair keratin intermediate filaments are embedded in an interfilamentous matrix, consisting of hair keratin-associated proteins (KRTAP), which are essential for the formation of a rigid and resistant hair shaft through their extensive disulfide bond cross-linking with abundant cysteine residues of hair keratins. The matrix proteins include the high-sulfur and high-glycine-tyrosine keratins. In Homo sapiens (Human), this protein is Keratin-associated protein 19-2 (KRTAP19-2).